The chain runs to 130 residues: UPF0146 protein AF_0739.1 (130 aa).

The protein belongs to the UPF0146 family.

The chain is UPF0146 protein AF_0739.1 from Archaeoglobus fulgidus (strain ATCC 49558 / DSM 4304 / JCM 9628 / NBRC 100126 / VC-16).